The following is a 678-amino-acid chain: UvrABC system protein B (678 aa).

In terms of domain architecture, Helicase ATP-binding spans 31–417 (EGLENGLAHQ…KSGGEIIDQV (387 aa)). Residue 44-51 (GVTGSGKT) participates in ATP binding. The Beta-hairpin signature appears at 97 to 120 (YYDYYQPEAYVPSSDTFIEKDASI). The Helicase C-terminal domain occupies 436–589 (QVDDLLSEAR…QMKYNEARGI (154 aa)). The UVR domain maps to 638–673 (QQQIKKLEQQMYKYAQDLEFEKAAAVRDQLQQLREH).

The protein belongs to the UvrB family. As to quaternary structure, forms a heterotetramer with UvrA during the search for lesions. Interacts with UvrC in an incision complex.

It is found in the cytoplasm. Functionally, the UvrABC repair system catalyzes the recognition and processing of DNA lesions. A damage recognition complex composed of 2 UvrA and 2 UvrB subunits scans DNA for abnormalities. Upon binding of the UvrA(2)B(2) complex to a putative damaged site, the DNA wraps around one UvrB monomer. DNA wrap is dependent on ATP binding by UvrB and probably causes local melting of the DNA helix, facilitating insertion of UvrB beta-hairpin between the DNA strands. Then UvrB probes one DNA strand for the presence of a lesion. If a lesion is found the UvrA subunits dissociate and the UvrB-DNA preincision complex is formed. This complex is subsequently bound by UvrC and the second UvrB is released. If no lesion is found, the DNA wraps around the other UvrB subunit that will check the other stand for damage. The chain is UvrABC system protein B from Pasteurella multocida (strain Pm70).